Reading from the N-terminus, the 163-residue chain is Probable chemoreceptor glutamine deamidase CheD (163 aa).

Belongs to the CheD family.

The catalysed reaction is L-glutaminyl-[protein] + H2O = L-glutamyl-[protein] + NH4(+). Its function is as follows. Probably deamidates glutamine residues to glutamate on methyl-accepting chemotaxis receptors (MCPs), playing an important role in chemotaxis. The protein is Probable chemoreceptor glutamine deamidase CheD of Borrelia turicatae (strain 91E135).